A 384-amino-acid chain; its full sequence is Dimethyladenosine transferase (384 aa).

A disordered region spans residues 1–24 (MPKTAKNKRNNAASGPYDKKSKGS). 6 residues coordinate S-adenosyl-L-methionine: His-39, Leu-41, Gly-66, Glu-87, Asp-115, and Asn-131. The tract at residues 289-309 (MDANSDTDNDNDGDAMEEDDD) is disordered.

This sequence belongs to the class I-like SAM-binding methyltransferase superfamily. rRNA adenine N(6)-methyltransferase family.

It localises to the cytoplasm. Its subcellular location is the nucleus. The protein resides in the nucleolus. The enzyme catalyses adenosine(1779)/adenosine(1780) in 18S rRNA + 4 S-adenosyl-L-methionine = N(6)-dimethyladenosine(1779)/N(6)-dimethyladenosine(1780) in 18S rRNA + 4 S-adenosyl-L-homocysteine + 4 H(+). Functionally, specifically dimethylates two adjacent adenosines in the loop of a conserved hairpin near the 3'-end of 18S rRNA in the 40S particle. The chain is Dimethyladenosine transferase (DIM1) from Chaetomium thermophilum (strain DSM 1495 / CBS 144.50 / IMI 039719) (Thermochaetoides thermophila).